The primary structure comprises 747 residues: Probable alpha-galactosidase C (747 aa).

The signal sequence occupies residues 1–24 (MVAFMNSATFVAGLFTLWSRPIWA). Asn36, Asn182, Asn190, Asn362, Asn429, and Asn449 each carry an N-linked (GlcNAc...) asparagine glycan. Asp507 (nucleophile) is an active-site residue. A glycan (N-linked (GlcNAc...) asparagine) is linked at Asn534. Residue Asp569 is the Proton donor of the active site.

Belongs to the glycosyl hydrolase 36 family. In terms of assembly, homotetramer. It depends on Mg(2+) as a cofactor. NAD(+) serves as cofactor.

It is found in the secreted. It carries out the reaction Hydrolysis of terminal, non-reducing alpha-D-galactose residues in alpha-D-galactosides, including galactose oligosaccharides, galactomannans and galactolipids.. In terms of biological role, hydrolyzes a variety of simple alpha-D-galactoside as well as more complex molecules such as oligosaccharides and polysaccharides. This chain is Probable alpha-galactosidase C (aglC), found in Aspergillus terreus (strain NIH 2624 / FGSC A1156).